Reading from the N-terminus, the 439-residue chain is Secreted aspartic protease LUC8 (439 aa).

A signal peptide spans 1–20 (MMHAFHHLAVLLIGSLPASA). N-linked (GlcNAc...) asparagine glycans are attached at residues Asn33 and Asn54. One can recognise a Peptidase A1 domain in the interval 51–435 (YLFNITVGTP…DFETQSFGLA (385 aa)). Asp69 is a catalytic residue. Residues Asn110, Asn126, Asn179, and Asn289 are each glycosylated (N-linked (GlcNAc...) asparagine). The active site involves Asp300. N-linked (GlcNAc...) asparagine glycans are attached at residues Asn329 and Asn373. Cys355 and Cys391 form a disulfide bridge.

The protein belongs to the peptidase A1 family.

It is found in the secreted. Secreted aspartic protease; part of the gene cluster that mediates the biosynthesis of the mycotoxin lucilactaene and the lucilactaene-related compound NG-391 that act as cell cycle inhibitors with potent growth inhibitory activity against malarial parasites, moderate growth inhibitory activity against cancer cells, and no activity against bacteria and fungi. Within the cluster, LUC7 and LUC8 encode proteins which are not commonly involved in the biosynthesis of secondary metabolites and are not essential for lucilactaene biosynthesis. The polypeptide is Secreted aspartic protease LUC8 (Fusarium sp).